A 357-amino-acid chain; its full sequence is MDLANGVISAELLHAQAHVWNHIFNFIKSMSLKCAIQLGIPDIIHNHGKPMTLPELVAKLPVHPKRSQCVYRLMRILVHSGFLAAQRVQQGKEEEGYVLTDASRLLLMDDSLSIRPLVLAMLDPILTKPWHYLSAWFQNDDPTPFHTAYERSFWDYAGHEPQLNNSFNEAMASDARLLTSVLLKEGQGVFAGLNSLVDVGGGTGKVAKAIANAFPHLNCTVLDLSHVVAGLQGSKNLNYFAGDMFEAIPPADAILLKWILHDWSNEECVKILKRCREAIPSKENGGKVIIIDMIMMKNQGDYKSTETQLFFDMTMMIFAPGRERDENEWEKLFLDAGFSHYKITPILGLRSLIEVYP.

Residues Gly200, Asp223, Asp243, Met244, and Lys257 each coordinate S-adenosyl-L-methionine. The active-site Proton acceptor is His261.

This sequence belongs to the class I-like SAM-binding methyltransferase superfamily. Cation-independent O-methyltransferase family. COMT subfamily.

The catalysed reaction is trans-resveratrol + 2 S-adenosyl-L-methionine = pterostilbene + 2 S-adenosyl-L-homocysteine + 2 H(+). In terms of biological role, catalyzes the biosynthesis of pterostilbene from resveratrol. Pterostilbene has both antifungal and pharmacological properties. Also has activity toward resveratrol monomethyl ether (RME). This Vitis vinifera (Grape) protein is Trans-resveratrol di-O-methyltransferase (ROMT).